Reading from the N-terminus, the 188-residue chain is Transmembrane protein 160 (188 aa).

The N-terminal 96 residues, 1–96 (MGGGWWWARA…ISFMQSDMGR (96 aa)), are a transit peptide targeting the mitochondrion. The disordered stretch occupies residues 24–52 (PPQRPRSGGARGSFAPGHGPRAGASPPPV). At S48 the chain carries Phosphoserine. Transmembrane regions (helical) follow at residues 102 to 122 (FFLL…VGLA) and 135 to 155 (AAVG…AVGL). The tract at residues 168–188 (PEDDGTASAEGPDEAGRPPPE) is disordered.

The protein belongs to the TMEM160 family.

The protein localises to the mitochondrion inner membrane. This Homo sapiens (Human) protein is Transmembrane protein 160.